The chain runs to 648 residues: Forkhead box protein N1 (648 aa).

Residues 1-105 (MVSLPPPQSD…SDKYPGFGFE (105 aa)) form a disordered region. A compositionally biased stretch (pro residues) spans 58-67 (ERTPSLPPHS). Residues 271–367 (KPIYSYSILI…EELQKWKRKD (97 aa)) constitute a DNA-binding region (fork-head). Disordered stretches follow at residues 392-445 (LGSP…LLMG), 458-508 (LSPG…LLAE), and 623-648 (LEPTPPTAPAGPSVYLSPSSKPVALA). Pro residues predominate over residues 462 to 473 (LAPPGPPQPLFP).

In terms of tissue distribution, expressed in thymus.

The protein resides in the nucleus. In terms of biological role, transcriptional regulator which regulates the development, differentiation, and function of thymic epithelial cells (TECs) both in the prenatal and postnatal thymus. Acts as a master regulator of the TECs lineage development and is required from the onset of differentiation in progenitor TECs in the developing fetus to the final differentiation steps through which TECs mature to acquire their full functionality. Regulates, either directly or indirectly the expression of a variety of genes that mediate diverse aspects of thymus development and function, including MHC Class II, DLL4, CCL25, CTSL, CD40 and PAX1. Regulates the differentiation of the immature TECs into functional cortical TECs (cTECs) and medullary TECs (mTECs). Essential for maintenance of mTECs population in the postnatal thymus. Involved in the morphogenesis and maintenance of the three-dimensional thymic microstructure which is necessary for a fully functional thymus. Plays an important role in the maintenance of hematopoiesis and particularly T lineage progenitors within the bone marrow niche with age. Essential for the vascularization of the thymus anlage. Promotes the terminal differentiation of epithelial cells in the epidermis and hair follicles, partly by negatively regulating the activity of protein kinase C. Plays a crucial role in the early prenatal stages of T-cell ontogeny. This Homo sapiens (Human) protein is Forkhead box protein N1 (FOXN1).